The primary structure comprises 410 residues: MKNLVGRFMRYVTFDTQSKPKNHHCPSSTGQKVFAQALYEELLELGLSDVSLDDHGYVMAKLPSNVNYPVPAIGFIAHMDTSPDACGKHVKPQIVEDYQGGDIALGKGDEVLSPIQYPDLHLLHGYNLITTDGTTLLGADNKAGIAEIITAMEILLADPSIPHGDISIAFTPDEEIGRGANHFDVAKFAAQWAYTIDGGPIGELEYENFNAATATVVCHGVNVHPGTAKDKMVNAMHIAAQFILMMPENETPQHTEGYQGFYHLSGATMSVAKSELKYILRDFEAIGLQARQALMQAKVAELNQQLKKGRVEVSFEQSYSNMKEKVEPHPHIIELAKQAMVACDVEPKIKPIRGGTDGARLSFMGLPCPNIFTGGYNFHGIHEFITIEGMEAAVQVIVKLAEKTALHYRQ.

H78 contributes to the Zn(2+) binding site. D80 is an active-site residue. Position 140 (D140) interacts with Zn(2+). The Proton acceptor role is filled by E174. Zn(2+) contacts are provided by E175, D197, and H379.

The protein belongs to the peptidase M20B family. It depends on Zn(2+) as a cofactor.

The protein resides in the cytoplasm. It catalyses the reaction Release of the N-terminal residue from a tripeptide.. Functionally, cleaves the N-terminal amino acid of tripeptides. In Vibrio cholerae serotype O1 (strain ATCC 39315 / El Tor Inaba N16961), this protein is Peptidase T.